The primary structure comprises 294 residues: 4-hydroxy-tetrahydrodipicolinate synthase (294 aa).

Residue Thr-49 coordinates pyruvate. Tyr-136 functions as the Proton donor/acceptor in the catalytic mechanism. Residue Lys-164 is the Schiff-base intermediate with substrate of the active site. Pyruvate is bound at residue Ile-207.

It belongs to the DapA family. In terms of assembly, homotetramer; dimer of dimers.

The protein resides in the cytoplasm. It catalyses the reaction L-aspartate 4-semialdehyde + pyruvate = (2S,4S)-4-hydroxy-2,3,4,5-tetrahydrodipicolinate + H2O + H(+). Its pathway is amino-acid biosynthesis; L-lysine biosynthesis via DAP pathway; (S)-tetrahydrodipicolinate from L-aspartate: step 3/4. Catalyzes the condensation of (S)-aspartate-beta-semialdehyde [(S)-ASA] and pyruvate to 4-hydroxy-tetrahydrodipicolinate (HTPA). The polypeptide is 4-hydroxy-tetrahydrodipicolinate synthase (Natronomonas pharaonis (strain ATCC 35678 / DSM 2160 / CIP 103997 / JCM 8858 / NBRC 14720 / NCIMB 2260 / Gabara) (Halobacterium pharaonis)).